Here is a 641-residue protein sequence, read N- to C-terminus: Chaperone protein DnaK (641 aa).

Thr-201 carries the post-translational modification Phosphothreonine; by autocatalysis. Residues 604–622 (ASAEQGGAAPGADAGNAGK) show a composition bias toward low complexity. The segment at 604–625 (ASAEQGGAAPGADAGNAGKAQD) is disordered.

The protein belongs to the heat shock protein 70 family.

Acts as a chaperone. The polypeptide is Chaperone protein DnaK (Stenotrophomonas maltophilia (strain R551-3)).